A 640-amino-acid chain; its full sequence is MELIPLIRDKSRLSDFLKDIPNDPGCYLMKDGEDRLLYVGKSKKLRNRVRSYFRSGNELSPRISLMVRQVADIELIVTDNESEALTLESNLIKSHQPYFNVLLKDDKKYPYVCITWGDKYPRIFLTRKRRQRQLKDKYYGPYVDVYLLRKTLFSIKKLFPLRQRRIPLYKDRTCLNYSIGRCPGVCQEEISSEDYKNTLKRVEMIFQGRTDELRILLEKQMISFSESLKFEEAGSVRDQLKGIDRLYESQKMIIPDSSVCRDIIAMASEENISSVQIFQMRSGKLIGRLGYFSDNSNFNSSQILQQVIENHYSNVDPVEIPSEILVQHQLVNNILISDWLSEIKKQKVNINVPKRSRKAEIIKLVEKNANLELQRIKQSHDKNLVELDDLTNILDLENIPKRIECYDISHIQGSDAVASQVVFIDGIAARQHYRRYKIKSPNIKIGHSDDFESMAEVITRRFRRWARFKEEGGDINALLSNQSSVLDNLNLNDWPDLVVIDGGKGQLSSVVAALEELKLDQNLNVISLAKKKEEVFIPNVKQSLVTESNQPGMLLLRRLRDEAHRFAITFHRQKRSQRMKRSQLNEIPGLGPQRIKLLLEHFRSIEAIQMATFSELSSTPGLGRSTAVVIRNYFHPDKNK.

The GIY-YIG domain occupies 22-101 (NDPGCYLMKD…IKSHQPYFNV (80 aa)). The UVR domain occupies 211 to 246 (DELRILLEKQMISFSESLKFEEAGSVRDQLKGIDRL).

This sequence belongs to the UvrC family. As to quaternary structure, interacts with UvrB in an incision complex.

Its subcellular location is the cytoplasm. In terms of biological role, the UvrABC repair system catalyzes the recognition and processing of DNA lesions. UvrC both incises the 5' and 3' sides of the lesion. The N-terminal half is responsible for the 3' incision and the C-terminal half is responsible for the 5' incision. In Prochlorococcus marinus (strain NATL1A), this protein is UvrABC system protein C.